The following is a 293-amino-acid chain: MSLIDWFAARRKDQFVGKVSQDTDEGDGLWVKCSECSQVAYRKDLISNFNVCNNCGHHNRINSDERINIIADKNSFKEFDSLLSPTDPLGFKDRRAYADRIKESQAGTGLRDGVVTGICSVNSMPLALAVMDFRFMGGSMGSVVGEKITRIIERATLENFPILIVCASGGARMQEGMLSLMQMAKISGALKKHKEKNLLYMPLLTHPTTGGVTASFAMLGDLILAEPKALIGFAGRRVIEQTLREKLPDNFQTAEYLLEHGFVDVIVKRKDLKDTLTKILKIHGVKELAEANT.

The CoA carboxyltransferase N-terminal domain occupies 29–293; sequence LWVKCSECSQ…GVKELAEANT (265 aa). Residues Cys-33, Cys-36, Cys-52, and Cys-55 each coordinate Zn(2+). A C4-type zinc finger spans residues 33 to 55; that stretch reads CSECSQVAYRKDLISNFNVCNNC.

This sequence belongs to the AccD/PCCB family. As to quaternary structure, acetyl-CoA carboxylase is a heterohexamer composed of biotin carboxyl carrier protein (AccB), biotin carboxylase (AccC) and two subunits each of ACCase subunit alpha (AccA) and ACCase subunit beta (AccD). Requires Zn(2+) as cofactor.

Its subcellular location is the cytoplasm. The catalysed reaction is N(6)-carboxybiotinyl-L-lysyl-[protein] + acetyl-CoA = N(6)-biotinyl-L-lysyl-[protein] + malonyl-CoA. Its pathway is lipid metabolism; malonyl-CoA biosynthesis; malonyl-CoA from acetyl-CoA: step 1/1. Its function is as follows. Component of the acetyl coenzyme A carboxylase (ACC) complex. Biotin carboxylase (BC) catalyzes the carboxylation of biotin on its carrier protein (BCCP) and then the CO(2) group is transferred by the transcarboxylase to acetyl-CoA to form malonyl-CoA. This is Acetyl-coenzyme A carboxylase carboxyl transferase subunit beta from Prochlorococcus marinus (strain AS9601).